We begin with the raw amino-acid sequence, 142 residues long: Alpha-lactalbumin (142 aa).

The first 19 residues, 1 to 19 (MMSFVSLLLVGILFHATQA), serve as a signal peptide directing secretion. The C-type lysozyme domain maps to 20-142 (EQLTKCEVFQ…KLDQWLCEKL (123 aa)). Disulfide bonds link cysteine 25–cysteine 139, cysteine 47–cysteine 130, cysteine 80–cysteine 96, and cysteine 92–cysteine 110. 2 N-linked (GlcNAc...) asparagine glycosylation sites follow: asparagine 64 and asparagine 93. Positions 98, 101, 103, 106, and 107 each coordinate Ca(2+).

It belongs to the glycosyl hydrolase 22 family. As to quaternary structure, lactose synthase (LS) is a heterodimer of a catalytic component, beta1,4-galactosyltransferase (beta4Gal-T1) and a regulatory component, alpha-lactalbumin (LA). In terms of tissue distribution, mammary gland specific. Secreted in milk.

The protein localises to the secreted. In terms of biological role, regulatory subunit of lactose synthase, changes the substrate specificity of galactosyltransferase in the mammary gland making glucose a good acceptor substrate for this enzyme. This enables LS to synthesize lactose, the major carbohydrate component of milk. In other tissues, galactosyltransferase transfers galactose onto the N-acetylglucosamine of the oligosaccharide chains in glycoproteins. The polypeptide is Alpha-lactalbumin (LALBA) (Ovis aries (Sheep)).